A 418-amino-acid polypeptide reads, in one-letter code: UDP-N-acetylglucosamine 1-carboxyvinyltransferase (418 aa).

Phosphoenolpyruvate is bound at residue 22-23; sequence KN. Residue Arg-92 coordinates UDP-N-acetyl-alpha-D-glucosamine. The active-site Proton donor is Cys-116. Cys-116 carries the post-translational modification 2-(S-cysteinyl)pyruvic acid O-phosphothioketal. UDP-N-acetyl-alpha-D-glucosamine-binding positions include 121-125, Asp-306, and Ile-328; that span reads RPVDQ.

It belongs to the EPSP synthase family. MurA subfamily.

The protein localises to the cytoplasm. The catalysed reaction is phosphoenolpyruvate + UDP-N-acetyl-alpha-D-glucosamine = UDP-N-acetyl-3-O-(1-carboxyvinyl)-alpha-D-glucosamine + phosphate. It functions in the pathway cell wall biogenesis; peptidoglycan biosynthesis. Cell wall formation. Adds enolpyruvyl to UDP-N-acetylglucosamine. The polypeptide is UDP-N-acetylglucosamine 1-carboxyvinyltransferase (Acinetobacter baylyi (strain ATCC 33305 / BD413 / ADP1)).